Here is a 336-residue protein sequence, read N- to C-terminus: Ketol-acid reductoisomerase (NADP(+)) 1 (336 aa).

One can recognise a KARI N-terminal Rossmann domain in the interval 2 to 181 (AKVYYEKDVT…GATRAGVLET (180 aa)). NADP(+) is bound by residues 25–28 (YGSQ), arginine 48, serine 52, and 82–85 (DELQ). Histidine 107 is an active-site residue. Glycine 133 provides a ligand contact to NADP(+). One can recognise a KARI C-terminal knotted domain in the interval 182–327 (TFKEETETDL…RKLREMMPFV (146 aa)). 4 residues coordinate Mg(2+): aspartate 190, glutamate 194, glutamate 226, and glutamate 230. Serine 251 provides a ligand contact to substrate.

Belongs to the ketol-acid reductoisomerase family. Mg(2+) serves as cofactor.

It catalyses the reaction (2R)-2,3-dihydroxy-3-methylbutanoate + NADP(+) = (2S)-2-acetolactate + NADPH + H(+). The catalysed reaction is (2R,3R)-2,3-dihydroxy-3-methylpentanoate + NADP(+) = (S)-2-ethyl-2-hydroxy-3-oxobutanoate + NADPH + H(+). It functions in the pathway amino-acid biosynthesis; L-isoleucine biosynthesis; L-isoleucine from 2-oxobutanoate: step 2/4. Its pathway is amino-acid biosynthesis; L-valine biosynthesis; L-valine from pyruvate: step 2/4. In terms of biological role, involved in the biosynthesis of branched-chain amino acids (BCAA). Catalyzes an alkyl-migration followed by a ketol-acid reduction of (S)-2-acetolactate (S2AL) to yield (R)-2,3-dihydroxy-isovalerate. In the isomerase reaction, S2AL is rearranged via a Mg-dependent methyl migration to produce 3-hydroxy-3-methyl-2-ketobutyrate (HMKB). In the reductase reaction, this 2-ketoacid undergoes a metal-dependent reduction by NADPH to yield (R)-2,3-dihydroxy-isovalerate. This Bacillus cereus (strain ATCC 14579 / DSM 31 / CCUG 7414 / JCM 2152 / NBRC 15305 / NCIMB 9373 / NCTC 2599 / NRRL B-3711) protein is Ketol-acid reductoisomerase (NADP(+)) 1.